The sequence spans 62 residues: Photosystem II reaction center protein Z (62 aa).

The residue at position 1 (Met1) is an N-formylmethionine. Topologically, residues 1 to 4 (MTIL) are lumenal. The chain crosses the membrane as a helical span at residues 5-25 (FQLALAALVILSFVMVIGVPV). Over 26–36 (AYASPQDWDRS) the chain is Cytoplasmic. The helical transmembrane segment at 37–58 (KQLIFLGSGLWIALVLVVGVLN) threads the bilayer. At 59-62 (FFVV) the chain is on the lumenal side.

It belongs to the PsbZ family. As to quaternary structure, PSII is composed of 1 copy each of membrane proteins PsbA, PsbB, PsbC, PsbD, PsbE, PsbF, PsbH, PsbI, PsbJ, PsbK, PsbL, PsbM, PsbT, PsbX, PsbY, PsbZ, Psb30/Ycf12, peripheral proteins PsbO, CyanoQ (PsbQ), PsbU, PsbV and a large number of cofactors. It forms dimeric complexes. Part of a photosystem II (PSII) assembly intermediate complex PSII-I; crystallized from a strain deleted of psbJ, it forms monomeric PSII before addition of the oxygen evolving complex. PSII-I includes 3 assembly factors not found in mature PSII (Psb27, Psb28 and Psb34). It depends on PSII binds multiple chlorophylls, carotenoids and specific lipids. as a cofactor.

The protein localises to the cellular thylakoid membrane. May control the interaction of photosystem II (PSII) cores with the light-harvesting antenna, regulates electron flow through the 2 photosystem reaction centers. PSII is a light-driven water plastoquinone oxidoreductase, using light energy to abstract electrons from H(2)O, generating a proton gradient subsequently used for ATP formation. Its function is as follows. May also aid in binding of PsbK, Psb30/Ycf12 and the oxygen-evolving complex to PSII, at least in vitro. This Thermosynechococcus vestitus (strain NIES-2133 / IAM M-273 / BP-1) protein is Photosystem II reaction center protein Z.